Reading from the N-terminus, the 179-residue chain is Protein HoxT (179 aa).

The chain is Protein HoxT (hoxT) from Cupriavidus necator (strain ATCC 17699 / DSM 428 / KCTC 22496 / NCIMB 10442 / H16 / Stanier 337) (Ralstonia eutropha).